A 287-amino-acid polypeptide reads, in one-letter code: Probable endonuclease 4 (287 aa).

Residues His69, His109, Glu144, Asp178, His181, His215, Asp228, His230, and Glu260 each contribute to the Zn(2+) site.

Belongs to the AP endonuclease 2 family. Zn(2+) is required as a cofactor.

It catalyses the reaction Endonucleolytic cleavage to 5'-phosphooligonucleotide end-products.. In terms of biological role, endonuclease IV plays a role in DNA repair. It cleaves phosphodiester bonds at apurinic or apyrimidinic (AP) sites, generating a 3'-hydroxyl group and a 5'-terminal sugar phosphate. The chain is Probable endonuclease 4 from Thermotoga maritima (strain ATCC 43589 / DSM 3109 / JCM 10099 / NBRC 100826 / MSB8).